The sequence spans 423 residues: Probable baseplate hub protein gp334 (423 aa).

In terms of assembly, homotrimer. Interacts with gp5 trimer.

It is found in the virion. Functionally, baseplate protein that is part of the baseplate hub. Involved in the tail assembly. The protein is Probable baseplate hub protein gp334 of Vibrio parahaemolyticus (KVP40).